Reading from the N-terminus, the 61-residue chain is DNA-directed RNA polymerase subunit Rpo6 (61 aa).

This sequence belongs to the archaeal Rpo6/eukaryotic RPB6 RNA polymerase subunit family. In terms of assembly, part of the RNA polymerase complex.

Its subcellular location is the cytoplasm. It carries out the reaction RNA(n) + a ribonucleoside 5'-triphosphate = RNA(n+1) + diphosphate. Its function is as follows. DNA-dependent RNA polymerase (RNAP) catalyzes the transcription of DNA into RNA using the four ribonucleoside triphosphates as substrates. This chain is DNA-directed RNA polymerase subunit Rpo6, found in Methanothermobacter thermautotrophicus (strain ATCC 29096 / DSM 1053 / JCM 10044 / NBRC 100330 / Delta H) (Methanobacterium thermoautotrophicum).